Here is a 98-residue protein sequence, read N- to C-terminus: Integration host factor subunit beta (98 aa).

This sequence belongs to the bacterial histone-like protein family. In terms of assembly, heterodimer of an alpha and a beta chain.

Its function is as follows. This protein is one of the two subunits of integration host factor, a specific DNA-binding protein that functions in genetic recombination as well as in transcriptional and translational control. This chain is Integration host factor subunit beta, found in Gluconacetobacter diazotrophicus (strain ATCC 49037 / DSM 5601 / CCUG 37298 / CIP 103539 / LMG 7603 / PAl5).